The primary structure comprises 292 residues: General transcription factor IIE subunit 2 (292 aa).

Met1 carries the N-acetylmethionine modification. The interval 17 to 64 is disordered; sequence LSTPVVEKRAVPSESPSSSSSKKKKAKVEHGGSSGSKQNSDHNNGSFN. Residues 51–63 show a composition bias toward polar residues; that stretch reads GSKQNSDHNNGSF. Ser62 carries the phosphoserine modification. A DNA-binding region (TFIIE beta) is located at residues 67-147; it reads ALSGSSGYKF…YAFKPKYNLK (81 aa). Residue Lys75 is modified to N6-acetyllysine. Residues 245–277 form a disordered region; that stretch reads SMQESGPKKVASIQRRKKPASQKKRRFKTHNEH. Over residues 258-272 the composition is skewed to basic residues; it reads QRRKKPASQKKRRFK.

It belongs to the TFIIE beta subunit family. Tetramer of two alpha and two beta chains. Interacts with FACT subunit SUPT16H. Interacts with ATF7IP. Interacts with SND1. Part of TBP-based Pol II pre-initiation complex (PIC), in which Pol II core assembles with general transcription factors and other specific initiation factors including GTF2E1, GTF2E2, GTF2F1, GTF2F2, TCEA1, ERCC2, ERCC3, GTF2H2, GTF2H3, GTF2H4, GTF2H5, GTF2A1, GTF2A2, GTF2B and TBP; this large multi-subunit PIC complex mediates DNA unwinding and targets Pol II core to the transcription start site where the first phosphodiester bond forms.

The protein localises to the nucleus. Functionally, recruits TFIIH to the initiation complex and stimulates the RNA polymerase II C-terminal domain kinase and DNA-dependent ATPase activities of TFIIH. Both TFIIH and TFIIE are required for promoter clearance by RNA polymerase. In Mus musculus (Mouse), this protein is General transcription factor IIE subunit 2 (Gtf2e2).